A 348-amino-acid chain; its full sequence is Phosphate acyltransferase (348 aa).

The protein belongs to the PlsX family. As to quaternary structure, homodimer. Probably interacts with PlsY.

Its subcellular location is the cytoplasm. The enzyme catalyses a fatty acyl-[ACP] + phosphate = an acyl phosphate + holo-[ACP]. It participates in lipid metabolism; phospholipid metabolism. Functionally, catalyzes the reversible formation of acyl-phosphate (acyl-PO(4)) from acyl-[acyl-carrier-protein] (acyl-ACP). This enzyme utilizes acyl-ACP as fatty acyl donor, but not acyl-CoA. In Synechocystis sp. (strain ATCC 27184 / PCC 6803 / Kazusa), this protein is Phosphate acyltransferase.